A 138-amino-acid polypeptide reads, in one-letter code: Putative nickel-responsive regulator (138 aa).

His-78, His-89, His-91, and Cys-97 together coordinate Ni(2+).

It belongs to the transcriptional regulatory CopG/NikR family. Requires Ni(2+) as cofactor.

In terms of biological role, transcriptional regulator. This chain is Putative nickel-responsive regulator, found in Pyrococcus horikoshii (strain ATCC 700860 / DSM 12428 / JCM 9974 / NBRC 100139 / OT-3).